The following is a 416-amino-acid chain: UDP-N-acetylglucosamine 1-carboxyvinyltransferase (416 aa).

22-23 (KN) contributes to the phosphoenolpyruvate binding site. Arginine 92 is a UDP-N-acetyl-alpha-D-glucosamine binding site. The active-site Proton donor is the cysteine 116. Cysteine 116 carries the post-translational modification 2-(S-cysteinyl)pyruvic acid O-phosphothioketal. Residues aspartate 306 and isoleucine 328 each contribute to the UDP-N-acetyl-alpha-D-glucosamine site.

It belongs to the EPSP synthase family. MurA subfamily.

Its subcellular location is the cytoplasm. The enzyme catalyses phosphoenolpyruvate + UDP-N-acetyl-alpha-D-glucosamine = UDP-N-acetyl-3-O-(1-carboxyvinyl)-alpha-D-glucosamine + phosphate. It participates in cell wall biogenesis; peptidoglycan biosynthesis. Functionally, cell wall formation. Adds enolpyruvyl to UDP-N-acetylglucosamine. In Buchnera aphidicola subsp. Baizongia pistaciae (strain Bp), this protein is UDP-N-acetylglucosamine 1-carboxyvinyltransferase.